The primary structure comprises 175 residues: MSQALTLARPYGRAAFAIAREGGTFAPWSDALAFSAQVAGDPRVAALLLNPALGQEQAVTLLAPPQAGEDYLCFLGVLADAQRLSLLPEVAGLYEHLRAEAEHVVKATVTSAAAMSQTELDTIAAALKKRFGRDVDITTAVDASLIGGAVIDTGDVVIDGSLKGKLARLQSSLAH.

The protein belongs to the ATPase delta chain family. F-type ATPases have 2 components, F(1) - the catalytic core - and F(0) - the membrane proton channel. F(1) has five subunits: alpha(3), beta(3), gamma(1), delta(1), epsilon(1). F(0) has three main subunits: a(1), b(2) and c(10-14). The alpha and beta chains form an alternating ring which encloses part of the gamma chain. F(1) is attached to F(0) by a central stalk formed by the gamma and epsilon chains, while a peripheral stalk is formed by the delta and b chains.

It is found in the cell inner membrane. Functionally, f(1)F(0) ATP synthase produces ATP from ADP in the presence of a proton or sodium gradient. F-type ATPases consist of two structural domains, F(1) containing the extramembraneous catalytic core and F(0) containing the membrane proton channel, linked together by a central stalk and a peripheral stalk. During catalysis, ATP synthesis in the catalytic domain of F(1) is coupled via a rotary mechanism of the central stalk subunits to proton translocation. Its function is as follows. This protein is part of the stalk that links CF(0) to CF(1). It either transmits conformational changes from CF(0) to CF(1) or is implicated in proton conduction. This Xanthomonas oryzae pv. oryzae (strain PXO99A) protein is ATP synthase subunit delta.